The following is a 330-amino-acid chain: Phosphate acyltransferase (330 aa).

It belongs to the PlsX family. Homodimer. Probably interacts with PlsY.

The protein localises to the cytoplasm. It carries out the reaction a fatty acyl-[ACP] + phosphate = an acyl phosphate + holo-[ACP]. The protein operates within lipid metabolism; phospholipid metabolism. In terms of biological role, catalyzes the reversible formation of acyl-phosphate (acyl-PO(4)) from acyl-[acyl-carrier-protein] (acyl-ACP). This enzyme utilizes acyl-ACP as fatty acyl donor, but not acyl-CoA. This chain is Phosphate acyltransferase, found in Streptococcus agalactiae serotype III (strain NEM316).